The chain runs to 488 residues: Adenylosuccinate synthetase 1, chloroplastic (488 aa).

A chloroplast-targeting transit peptide spans 1 to 47 (MSLSTVNHAAAAAAAAAGPGKSFSAAAPAAPSVRLPRTRAPAAAAVS). GTP-binding positions include 75–81 (GDEGKGK) and 103–105 (GHT). The active-site Proton acceptor is the Asp76. Residues Asp76 and Gly103 each coordinate Mg(2+). Residues 76–79 (DEGK), 101–104 (NAGH), Thr193, Arg207, Gln287, Thr302, and Arg366 contribute to the IMP site. The active-site Proton donor is His104. Substrate is bound at residue 362–368 (TTTGRPR). GTP is bound by residues Arg368, 394–396 (KLD), and 477–479 (GVG).

Belongs to the adenylosuccinate synthetase family. In terms of assembly, homodimer. The cofactor is Mg(2+).

Its subcellular location is the plastid. The protein localises to the chloroplast. It carries out the reaction IMP + L-aspartate + GTP = N(6)-(1,2-dicarboxyethyl)-AMP + GDP + phosphate + 2 H(+). It participates in purine metabolism; AMP biosynthesis via de novo pathway; AMP from IMP: step 1/2. Plays an important role in the de novo pathway and in the salvage pathway of purine nucleotide biosynthesis. Catalyzes the first committed step in the biosynthesis of AMP from IMP. The polypeptide is Adenylosuccinate synthetase 1, chloroplastic (Oryza sativa subsp. japonica (Rice)).